Reading from the N-terminus, the 522-residue chain is Signal transduction histidine-protein kinase/phosphatase MprB (522 aa).

At 1–30 (MIRLYRPQRPPLRAPLRATPSLSLRWRVML) the chain is on the cytoplasmic side. Residues 31–51 (LAMSMVAMVVVLMAFAVYAVI) form a helical membrane-spanning segment. The Extracellular portion of the chain corresponds to 52–167 (SAALYSDIDN…PTEAVMNKLR (116 aa)). The helical transmembrane segment at 168 to 188 (WVLLIVGGVGVAVAAVAGGMV) threads the bilayer. The Cytoplasmic segment spans residues 189–522 (TRAGLRPVAR…SVDSQSARAR (334 aa)). The HAMP domain occupies 190–242 (RAGLRPVARLTEAAERVARTDDLRPIPVFGSDELARLTESFNLMLRALAESRE). One can recognise a Histidine kinase domain in the interval 250-470 (DAGHELRTPL…SFYVLLPGRS (221 aa)). The residue at position 253 (His-253) is a Phosphohistidine; by autocatalysis. The segment at 467-522 (PGRSLPPAGHSTPAGESETDQAEAATDPAVPVAGDTANSRESANVISVDSQSARAR) is disordered. A compositionally biased stretch (polar residues) spans 502–522 (TANSRESANVISVDSQSARAR).

Mg(2+) serves as cofactor. Mn(2+) is required as a cofactor. Autophosphorylated.

It localises to the cell membrane. It catalyses the reaction ATP + protein L-histidine = ADP + protein N-phospho-L-histidine.. In terms of biological role, member of the two-component regulatory system MprB/MprA which contributes to maintaining a balance among several systems involved in stress resistance and is required for establishment and maintenance of persistent infection in the host. In response to environmental signals MprB acts both as a membrane-associated protein kinase that undergoes autophosphorylation and subsequently transfers the phosphate to MprA, and a protein phosphatase that dephosphorylates phospho-MprA. The polypeptide is Signal transduction histidine-protein kinase/phosphatase MprB (mprB) (Mycolicibacterium paratuberculosis (strain ATCC BAA-968 / K-10) (Mycobacterium paratuberculosis)).